A 137-amino-acid chain; its full sequence is Interferon-induced transmembrane protein 3 (137 aa).

The Cytoplasmic portion of the chain corresponds to 1–57; it reads MNHTSQAFITAASGGQPPNYERIKEEYEVAEMGAPHGSASVRTTVINMPREVSVPDH. A Phosphotyrosine modification is found at Tyr20. Lys24 participates in a covalent cross-link: Glycyl lysine isopeptide (Lys-Gly) (interchain with G-Cter in ubiquitin). Tyr27 is modified (phosphotyrosine). The helical intramembrane region spans 58–78; the sequence is VVWSLFNTLFMNFCCLGFIAY. The segment at 60–93 is interaction with SPP1; it reads WSLFNTLFMNFCCLGFIAYAYSVKSRDRKMVGDV. Residues Cys71 and Cys72 are each lipidated (S-palmitoyl cysteine). The Cytoplasmic segment spans residues 79 to 109; it reads AYSVKSRDRKMVGDVTGAQAYASTAKCLNIS. Glycyl lysine isopeptide (Lys-Gly) (interchain with G-Cter in ubiquitin) cross-links involve residues Lys83, Lys88, and Lys104. The S-palmitoyl cysteine moiety is linked to residue Cys105. Positions 108–133 are interaction with VAPA; that stretch reads ISTLVLSILMVVITIVSVIIIVLNAQ. The chain crosses the membrane as a helical span at residues 110 to 130; the sequence is TLVLSILMVVITIVSVIIIVL. Residues 131–137 lie on the Extracellular side of the membrane; the sequence is NAQNLHT.

This sequence belongs to the CD225/Dispanin family. As to quaternary structure, interacts with ATP6V0B. Interacts with CD81. Interacts with SPP1; the interaction reduces OPN expression. Interacts with BRI3. Post-translationally, polyubiquitinated with both 'Lys-48' and 'Lys-63' linkages. Ubiquitination negatively regulates antiviral activity. Lys-24 is the most prevalent ubiquitination site. In terms of processing, phosphorylation at Tyr-20 is required for endosomal and lysosomal location. As to expression, expressed in acinar cell. Predominantly expressed in nascent primordial germ cells, as well as in gonadal germ cells.

The protein localises to the cell membrane. It localises to the late endosome membrane. The protein resides in the early endosome membrane. It is found in the lysosome membrane. Its subcellular location is the cytoplasm. The protein localises to the perinuclear region. IFN-induced antiviral protein which disrupts intracellular cholesterol homeostasis. Inhibits the entry of viruses to the host cell cytoplasm by preventing viral fusion with cholesterol depleted endosomes. May inactivate new enveloped viruses which buds out of the infected cell, by letting them go out with a cholesterol depleted membrane. Active against multiple viruses, including influenza A virus, SARS coronaviruses (SARS-CoV and SARS-CoV-2), Marburg virus (MARV), Ebola virus (EBOV), Dengue virus (DNV), West Nile virus (WNV), human immunodeficiency virus type 1 (HIV-1), hepatitis C virus (HCV) and vesicular stomatitis virus (VSV). Can inhibit: influenza virus hemagglutinin protein-mediated viral entry, MARV and EBOV GP1,2-mediated viral entry, SARS-CoV and SARS-CoV-2 S protein-mediated viral entry and VSV G protein-mediated viral entry. Plays a critical role in the structural stability and function of vacuolar ATPase (v-ATPase). Establishes physical contact with the v-ATPase of endosomes which is critical for proper clathrin localization and is also required for the function of the v-ATPase to lower the pH in phagocytic endosomes thus establishing an antiviral state. In hepatocytes, IFITM proteins act in a coordinated manner to restrict HCV infection by targeting the endocytosed HCV virion for lysosomal degradation. IFITM2 and IFITM3 display anti-HCV activity that may complement the anti-HCV activity of IFITM1 by inhibiting the late stages of HCV entry, possibly in a coordinated manner by trapping the virion in the endosomal pathway and targeting it for degradation at the lysosome. Exerts opposing activities on SARS-CoV-2, including amphipathicity-dependent restriction of virus at endosomes and amphipathicity-independent enhancement of infection at the plasma membrane. The polypeptide is Interferon-induced transmembrane protein 3 (Mus musculus (Mouse)).